We begin with the raw amino-acid sequence, 407 residues long: NAD(P)H-quinone oxidoreductase subunit 1 (407 aa).

Helical transmembrane passes span 28 to 48 (WLPL…IAAV), 96 to 116 (WLFT…YLVI), 127 to 147 (ITIG…GALM), 175 to 195 (LALS…VDIV), 203 to 223 (LFSF…IFLI), 267 to 287 (LILA…FIVP), 309 to 329 (ALVG…LAIL), 347 to 367 (WKFL…LVLL), and 374 to 394 (TLPL…AMSL).

The protein belongs to the complex I subunit 1 family. As to quaternary structure, NDH-1 is composed of at least 11 different subunits.

It localises to the cell inner membrane. It carries out the reaction a plastoquinone + NADH + (n+1) H(+)(in) = a plastoquinol + NAD(+) + n H(+)(out). It catalyses the reaction a plastoquinone + NADPH + (n+1) H(+)(in) = a plastoquinol + NADP(+) + n H(+)(out). Functionally, NDH-1 shuttles electrons from an unknown electron donor, via FMN and iron-sulfur (Fe-S) centers, to quinones in the respiratory and/or the photosynthetic chain. The immediate electron acceptor for the enzyme in this species is believed to be plastoquinone. Couples the redox reaction to proton translocation, and thus conserves the redox energy in a proton gradient. The polypeptide is NAD(P)H-quinone oxidoreductase subunit 1 (Gloeobacter violaceus (strain ATCC 29082 / PCC 7421)).